The following is a 211-amino-acid chain: Mediator of RNA polymerase II transcription subunit 20 (211 aa).

This sequence belongs to the Mediator complex subunit 20 family. As to quaternary structure, component of the Mediator complex.

The protein resides in the nucleus. Component of the Mediator complex, a coactivator involved in the regulated transcription of nearly all RNA polymerase II-dependent genes. Mediator functions as a bridge to convey information from gene-specific regulatory proteins to the basal RNA polymerase II transcription machinery. Mediator is recruited to promoters by direct interactions with regulatory proteins and serves as a scaffold for the assembly of a functional preinitiation complex with RNA polymerase II and the general transcription factors. The chain is Mediator of RNA polymerase II transcription subunit 20 (med20) from Xenopus laevis (African clawed frog).